The primary structure comprises 295 residues: Small ribosomal subunit protein uS2 (295 aa).

The protein belongs to the universal ribosomal protein uS2 family. In terms of assembly, component of the small ribosomal subunit. Mature ribosomes consist of a small (40S) and a large (60S) subunit. The 40S subunit contains about 33 different proteins and 1 molecule of RNA (18S). The 60S subunit contains about 49 different proteins and 3 molecules of RNA (25S, 5.8S and 5S). Interacts with RPS21.

It is found in the cytoplasm. Its function is as follows. Required for the assembly and/or stability of the 40S ribosomal subunit. Required for the processing of the 20S rRNA-precursor to mature 18S rRNA in a late step of the maturation of 40S ribosomal subunits. The polypeptide is Small ribosomal subunit protein uS2 (Paracoccidioides brasiliensis (strain Pb03)).